The following is a 417-amino-acid chain: NADH-quinone oxidoreductase subunit D (417 aa).

This sequence belongs to the complex I 49 kDa subunit family. In terms of assembly, NDH-1 is composed of 14 different subunits. Subunits NuoB, C, D, E, F, and G constitute the peripheral sector of the complex.

The protein resides in the cell inner membrane. The catalysed reaction is a quinone + NADH + 5 H(+)(in) = a quinol + NAD(+) + 4 H(+)(out). In terms of biological role, NDH-1 shuttles electrons from NADH, via FMN and iron-sulfur (Fe-S) centers, to quinones in the respiratory chain. The immediate electron acceptor for the enzyme in this species is believed to be ubiquinone. Couples the redox reaction to proton translocation (for every two electrons transferred, four hydrogen ions are translocated across the cytoplasmic membrane), and thus conserves the redox energy in a proton gradient. The chain is NADH-quinone oxidoreductase subunit D from Halorhodospira halophila (strain DSM 244 / SL1) (Ectothiorhodospira halophila (strain DSM 244 / SL1)).